Consider the following 529-residue polypeptide: Tyrosine-protein kinase Fgr (529 aa).

The N-myristoyl glycine moiety is linked to residue Gly-2. Residues Cys-3 and Cys-6 are each lipidated (S-palmitoyl cysteine). Position 34 is a phosphotyrosine (Tyr-34). One can recognise an SH3 domain in the interval 77-138; that stretch reads IGVTLFIALY…PSNYVAPVDS (62 aa). The 98-residue stretch at 144-241 folds into the SH2 domain; sequence WYFGKIGRKD…GLCNLLIAPC (98 aa). At Tyr-208 the chain carries Phosphotyrosine. Phosphoserine is present on Ser-218. A Protein kinase domain is found at 263–516; the sequence is ITLERRLGTG…YLQSFLEDYF (254 aa). Residues 269-277 and Lys-291 each bind ATP; that span reads LGTGCFGDV. Asp-382 (proton acceptor) is an active-site residue. Position 412 is a phosphotyrosine (Tyr-412). Residue Tyr-523 is modified to Phosphotyrosine; by SRC.

This sequence belongs to the protein kinase superfamily. Tyr protein kinase family. SRC subfamily. Interacts with ITGB1, ITGB2, MS4A2/FCER1B, FCER1G, FCGR2A and/or FCGR2B. Interacts (via SH2 domain) with SYK (tyrosine phosphorylated). Interacts (via SH2 domain) with FLT3 (tyrosine phosphorylated). Interacts with PTK2/FAK1. Interacts (via SH2 domain) with HCLS1 (tyrosine phosphorylated by SYK). Interacts with SIRPA and PTPNS1. Interacts (not phosphorylated on tyrosine residues) with CBL; FGR tyrosine phosphorylation promotes dissociation. Interacts with PIK3R1 and FASLG. Interacts with CLNK. In terms of processing, ubiquitinated. Becomes ubiquitinated in response to ITGB2 signaling; this does not lead to degradation. Phosphorylated. Autophosphorylated on tyrosine residues. Becomes phosphorylated in response to FCGR2A and/or FCGR2B engagement, cell adhesion and signaling by ITGB2. Prior phosphorylation at Tyr-523 by SRC inhibits ulterior autophosphorylation at Tyr-412. Detected in neutrophils, monocytes and natural killer cells (at protein level). Detected in monocytes and large lymphocytes.

The protein localises to the cell membrane. Its subcellular location is the cell projection. The protein resides in the ruffle membrane. It localises to the cytoplasm. It is found in the cytosol. The protein localises to the cytoskeleton. Its subcellular location is the mitochondrion inner membrane. The protein resides in the mitochondrion intermembrane space. The catalysed reaction is L-tyrosyl-[protein] + ATP = O-phospho-L-tyrosyl-[protein] + ADP + H(+). Activated by autophosphorylation. Prior phosphorylation at Tyr-523 by SRC inhibits ulterior autophosphorylation at Tyr-412. Activated by phorbol myristate acetate, phosphatidic acid and poly-Lys. Binding (via SH2 domain) of HCLS1 that is already phosphorylated by SYK strongly increases kinase activity. Its function is as follows. Non-receptor tyrosine-protein kinase that transmits signals from cell surface receptors devoid of kinase activity and contributes to the regulation of immune responses, including neutrophil, monocyte, macrophage and mast cell functions, cytoskeleton remodeling in response to extracellular stimuli, phagocytosis, cell adhesion and migration. Promotes mast cell degranulation, release of inflammatory cytokines and IgE-mediated anaphylaxis. Acts downstream of receptors that bind the Fc region of immunoglobulins, such as MS4A2/FCER1B, FCGR2A and/or FCGR2B. Acts downstream of ITGB1 and ITGB2, and regulates actin cytoskeleton reorganization, cell spreading and adhesion. Depending on the context, activates or inhibits cellular responses. Functions as a negative regulator of ITGB2 signaling, phagocytosis and SYK activity in monocytes. Required for normal ITGB1 and ITGB2 signaling, normal cell spreading and adhesion in neutrophils and macrophages. Functions as a positive regulator of cell migration and regulates cytoskeleton reorganization via RAC1 activation. Phosphorylates SYK (in vitro) and promotes SYK-dependent activation of AKT1 and MAP kinase signaling. Phosphorylates PLD2 in antigen-stimulated mast cells, leading to PLD2 activation and the production of the signaling molecules lysophosphatidic acid and diacylglycerol. Promotes activation of PIK3R1. Phosphorylates FASLG, and thereby regulates its ubiquitination and subsequent internalization. Phosphorylates ABL1. Promotes phosphorylation of CBL, CTTN, PIK3R1, PTK2/FAK1, PTK2B/PYK2 and VAV2. Phosphorylates HCLS1 that has already been phosphorylated by SYK, but not unphosphorylated HCLS1. Together with CLNK, it acts as a negative regulator of natural killer cell-activating receptors and inhibits interferon-gamma production. In Homo sapiens (Human), this protein is Tyrosine-protein kinase Fgr (FGR).